The following is a 753-amino-acid chain: Metal regulatory transcription factor 1 (753 aa).

At glycine 2 the chain carries N-acetylglycine. Serine 5 bears the Phosphoserine mark. The Nuclear localization signal signature appears at lysine 133–lysine 138. C2H2-type zinc fingers lie at residues tyrosine 140–histidine 164, phenylalanine 170–histidine 194, phenylalanine 200–histidine 224, phenylalanine 229–histidine 253, phenylalanine 259–histidine 283, and phenylalanine 289–histidine 313. Serine 305 is modified (phosphoserine). 3 disordered regions span residues serine 308–glycine 328, glutamate 395–glutamine 466, and serine 648–methionine 715. A compositionally biased stretch (polar residues) spans proline 408–leucine 417. The span at serine 655 to proline 666 shows a compositional bias: pro residues. Residues serine 679–serine 698 are compositionally biased toward low complexity. The segment covering glutamine 700 to leucine 712 has biased composition (polar residues).

The protein localises to the nucleus. It localises to the cytoplasm. Zinc-dependent transcriptional regulator of cellular adaption to conditions of exposure to heavy metals. Binds to metal responsive elements (MRE) in promoters and activates the transcription of metallothionein genes like metallothionein-2/MT2A. Also regulates the expression of metalloproteases in response to intracellular zinc and functions as a catabolic regulator of cartilages. This chain is Metal regulatory transcription factor 1 (MTF1), found in Homo sapiens (Human).